A 1300-amino-acid polypeptide reads, in one-letter code: uncharacterized protein (1300 aa).

An N-terminal signal peptide occupies residues 1–26; sequence MGYKLKRWPLVAFTFTGIGLGVVLAA. Cysteine 27 carries the N-palmitoyl cysteine lipid modification. The S-diacylglycerol cysteine moiety is linked to residue cysteine 27. Over residues 464–478 the composition is skewed to low complexity; the sequence is AMAAASTGADSSSGT. 4 disordered regions span residues 464 to 487, 620 to 639, 774 to 797, and 1244 to 1269; these read AMAAASTGADSSSGTNVGGSSGGN, ASVSVQTTQQNRQQSTDTQE, DSQKSTNTVKQPDIKPTRENNDKK, and KMSDSSSSSQGTKTIRKPKPHHSPRT. Polar residues-rich tracts occupy residues 620-637 and 774-783; these read ASVSVQTTQQNRQQSTDT and DSQKSTNTVK. Over residues 785–797 the composition is skewed to basic and acidic residues; sequence PDIKPTRENNDKK. Over residues 1257–1269 the composition is skewed to basic residues; it reads TIRKPKPHHSPRT.

The protein belongs to the MG307/MG309/MG338 family.

The protein localises to the cell membrane. This is an uncharacterized protein from Mycoplasma pneumoniae (strain ATCC 29342 / M129 / Subtype 1) (Mycoplasmoides pneumoniae).